The sequence spans 414 residues: tRNA N6-adenosine threonylcarbamoyltransferase, mitochondrial (414 aa).

A mitochondrion-targeting transit peptide spans 1–29; the sequence is MLMLRRTAGAIPKPPKSKVYGFLRRFSVH. An N6-acetyllysine mark is found at K74 and K140. Residues H147 and H151 each contribute to the a divalent metal cation site. Residues 169 to 173 and D202 each bind substrate; that span reads LISGG. K203 is modified (N6-acetyllysine). Residues G222 and E226 each contribute to the substrate site. 2 positions are modified to N6-acetyllysine: K230 and K299. Residues 329–330 and T357 each bind substrate; that span reads SN. D358 is an a divalent metal cation binding site.

It belongs to the KAE1 / TsaD family. Monomer. Requires a divalent metal cation as cofactor.

Its subcellular location is the mitochondrion. The catalysed reaction is L-threonylcarbamoyladenylate + adenosine(37) in tRNA = N(6)-L-threonylcarbamoyladenosine(37) in tRNA + AMP + H(+). Functionally, required for the formation of a threonylcarbamoyl group on adenosine at position 37 (t(6)A37) in mitochondrial tRNAs that read codons beginning with adenine. Probably involved in the transfer of the threonylcarbamoyl moiety of threonylcarbamoyl-AMP (TC-AMP) to the N6 group of A37. Involved in mitochondrial genome maintenance. The polypeptide is tRNA N6-adenosine threonylcarbamoyltransferase, mitochondrial (Mus musculus (Mouse)).